Here is a 244-residue protein sequence, read N- to C-terminus: MSIFTSFLLLCVVTVVYAETLTEGVQNSCPVVTCSSPGLNGFPGKDGRDGAKGEKGEPGQGLRGLQGPPGKVGPTGPPGNPGLKGAVGPKGDRGDRAEFDTSEIDSEIAALRSELRALRNWVLFSLSEKVGKKYFVSSVKKMSLDRVKALCSEFQGSVATPRNAEENSAIQKVAKDIAYLGITDVRVEGSFEDLTGNRVRYTNWNDGEPNNTGDGEDCVVILGNGKWNDVPCSDSFLAICEFSD.

An N-terminal signal peptide occupies residues Met1–Ala18. Positions Gly38–Arg96 constitute a Collagen-like domain. Residues Asn40–Thr101 are disordered. Position 43 is a 4-hydroxyproline (Pro43). Positions Lys45 to Glu57 are enriched in basic and acidic residues. A 4-hydroxyproline mark is found at Pro58, Pro69, Pro78, and Pro81. A compositionally biased stretch (low complexity) spans Leu65–Pro74. A compositionally biased stretch (basic and acidic residues) spans Lys90–Phe99. A coiled-coil region spans residues Ile108–Leu126. The 113-residue stretch at Lys129–Glu241 folds into the C-type lectin domain. 2 disulfides stabilise this stretch: Cys151-Cys240 and Cys218-Cys232. Residue Asn210 is glycosylated (N-linked (GlcNAc...) asparagine).

Oligomeric complex of 3 or more homotrimers. Interacts with MASP1 and MASP2. Interacts with MEP1A and MEP1B and may inhibit their catalytic activity. Hydroxylation on proline residues within the sequence motif, GXPG, is most likely to be 4-hydroxy as this fits the requirement for 4-hydroxylation in vertebrates.

The protein localises to the secreted. Calcium-dependent lectin involved in innate immune defense. Binds mannose, fucose and N-acetylglucosamine on different microorganisms and activates the lectin complement pathway. Binds to late apoptotic cells, as well as to apoptotic blebs and to necrotic cells, but not to early apoptotic cells, facilitating their uptake by macrophages. The sequence is that of Mannose-binding protein C (Mbl2) from Mus musculus (Mouse).